The chain runs to 131 residues: Protein anoxia up-regulated (131 aa).

Over residues 1 to 24 (MVYESGFTTRRTYSSRPVTTSYAV) the composition is skewed to polar residues. The tract at residues 1–121 (MVYESGFTTR…STTSGNLPGG (121 aa)) is disordered. Composition is skewed to low complexity over residues 44–53 (SSDYSYTSKS) and 98–116 (TSTT…TTSG).

Concentrated in lamina neurons, first optic lobe neurons and cortical neurons of central brain.

In terms of biological role, plays an important role in the regulation of tissue responsiveness to oxygen deprivation. The polypeptide is Protein anoxia up-regulated (Drosophila melanogaster (Fruit fly)).